A 98-amino-acid polypeptide reads, in one-letter code: Large ribosomal subunit protein eL21 (98 aa).

The disordered stretch occupies residues methionine 1 to lysine 24.

Belongs to the eukaryotic ribosomal protein eL21 family.

This is Large ribosomal subunit protein eL21 (rpl21e) from Thermoplasma acidophilum (strain ATCC 25905 / DSM 1728 / JCM 9062 / NBRC 15155 / AMRC-C165).